The primary structure comprises 234 residues: Ribonuclease 3 (234 aa).

An RNase III domain is found at 4–133 (LLDLEHKLNY…ILGAVYIDSN (130 aa)). Glu46 contributes to the Mg(2+) binding site. The active site involves Asp50. Mg(2+) contacts are provided by Asp119 and Glu122. Glu122 is an active-site residue. Residues 160-228 (DFKSILQEYV…AKALCIKLGV (69 aa)) enclose the DRBM domain.

Belongs to the ribonuclease III family. Homodimer. Mg(2+) is required as a cofactor.

The protein resides in the cytoplasm. It catalyses the reaction Endonucleolytic cleavage to 5'-phosphomonoester.. Digests double-stranded RNA. Involved in the processing of primary rRNA transcript to yield the immediate precursors to the large and small rRNAs (23S and 16S). Processes some mRNAs, and tRNAs when they are encoded in the rRNA operon. Processes pre-crRNA and tracrRNA of type II CRISPR loci if present in the organism. The polypeptide is Ribonuclease 3 (Fusobacterium nucleatum subsp. nucleatum (strain ATCC 25586 / DSM 15643 / BCRC 10681 / CIP 101130 / JCM 8532 / KCTC 2640 / LMG 13131 / VPI 4355)).